A 493-amino-acid polypeptide reads, in one-letter code: Probable malate:quinone oxidoreductase (493 aa).

This sequence belongs to the MQO family. It depends on FAD as a cofactor.

It catalyses the reaction (S)-malate + a quinone = a quinol + oxaloacetate. It participates in carbohydrate metabolism; tricarboxylic acid cycle; oxaloacetate from (S)-malate (quinone route): step 1/1. The polypeptide is Probable malate:quinone oxidoreductase (Mycobacterium tuberculosis (strain ATCC 25177 / H37Ra)).